We begin with the raw amino-acid sequence, 906 residues long: Nuclear factor NF-kappa-B p100 subunit (906 aa).

An RHD domain is found at 34–223 (AVGPYLVIIE…DPIHDSKSPG (190 aa)). Residues 336-340 (RNRKK) carry the Nuclear localization signal motif. Positions 345–374 (FPQHFGGGSHMGGAGGAGGFGAGGGGNLSF) are GRR. ANK repeat units follow at residues 472–501 (NGDTPLHLAIIHEQTAVIKQLIEVVVSIPS), 511–540 (LQQTPLHLAVITKQPQVVQLLLEAHANPTL), 544–573 (YGNSLLHLALQAADEEMLRMLLAHLASATP), 582–611 (QGLLPVHLAVKAKSPACLDLLVRKGADVNG), 616–646 (GGRTPLHLAVEMENLNMATHLVKKLGANVNS), and 650–679 (AGNTPLHLAAGLGSPTLTKLLLKAGADVQR). Disordered regions lie at residues 677-734 (VQRE…GPRQ) and 857-906 (EPLE…QQVH). Residues 684 to 695 (PVSPSSVRVPSS) are compositionally biased toward low complexity. Over residues 697-708 (TDGDPEEQEQEQ) the composition is skewed to acidic residues. One can recognise a Death domain in the interval 771 to 857 (RNHLLSLDTD…GAVRMLRKPE (87 aa)).

In terms of assembly, component of the NF-kappa-B RelB-p52 complex. While translation occurs, the particular unfolded structure after the GRR repeat promotes the generation of p52 making it an acceptable substrate for the proteasome. This process is known as cotranslational processing. The processed form is active and the unprocessed form acts as an inhibitor (I kappa B-like), being able to form cytosolic complexes with NF-kappa B, trapping it in the cytoplasm. Complete folding of the region downstream of the GRR repeat precludes processing. In terms of processing, constitutive processing is tightly suppressed by its C-terminal processing inhibitory domain, named PID, which contains the death domain.

It is found in the nucleus. The protein localises to the cytoplasm. In terms of biological role, NF-kappa-B is a pleiotropic transcription factor present in almost all cell types and is the endpoint of a series of signal transduction events that are initiated by a vast array of stimuli related to many biological processes such as inflammation, immunity, differentiation, cell growth, tumorigenesis and apoptosis. NF-kappa-B is a homo- or heterodimeric complex formed by the Rel-like domain-containing proteins RELA/p65, RELB, NFKB1/p105, NFKB1/p50, REL and NFKB2/p52. The dimers bind at kappa-B sites in the DNA of their target genes and the individual dimers have distinct preferences for different kappa-B sites that they can bind with distinguishable affinity and specificity. Different dimer combinations act as transcriptional activators or repressors, respectively. NF-kappa-B is controlled by various mechanisms of post-translational modification and subcellular compartmentalization as well as by interactions with other cofactors or corepressors. NF-kappa-B complexes are held in the cytoplasm in an inactive state complexed with members of the NF-kappa-B inhibitor (I-kappa-B) family. In a conventional activation pathway, I-kappa-B is phosphorylated by I-kappa-B kinases (IKKs) in response to different activators, subsequently degraded thus liberating the active NF-kappa-B complex which translocates to the nucleus. In a non-canonical activation pathway, the MAP3K14-activated CHUK/IKKA homodimer phosphorylates NFKB2/p100 associated with RelB, inducing its proteolytic processing to NFKB2/p52 and the formation of NF-kappa-B RelB-p52 complexes. The NF-kappa-B heterodimeric RelB-p52 complex is a transcriptional activator. NFKB2 appears to have dual functions such as cytoplasmic retention of attached NF-kappa-B proteins by p100 and generation of p52 by a cotranslational processing. The proteasome-mediated process ensures the production of both p52 and p100 and preserves their independent function. p52 binds to the kappa-B consensus sequence 5'-GGRNNYYCC-3', located in the enhancer region of genes involved in immune response and acute phase reactions. In concert with RELB, may play a role in the regulation of the circadian clock. The protein is Nuclear factor NF-kappa-B p100 subunit (NFKB2) of Gallus gallus (Chicken).